Reading from the N-terminus, the 192-residue chain is Imidazole glycerol phosphate synthase subunit HisH (192 aa).

A Glutamine amidotransferase type-1 domain is found at 1 to 192 (MIVIVDYGLG…QAIQGGFIND (192 aa)). Cysteine 77 (nucleophile) is an active-site residue. Residues histidine 169 and glutamate 171 contribute to the active site.

Heterodimer of HisH and HisF.

Its subcellular location is the cytoplasm. It catalyses the reaction 5-[(5-phospho-1-deoxy-D-ribulos-1-ylimino)methylamino]-1-(5-phospho-beta-D-ribosyl)imidazole-4-carboxamide + L-glutamine = D-erythro-1-(imidazol-4-yl)glycerol 3-phosphate + 5-amino-1-(5-phospho-beta-D-ribosyl)imidazole-4-carboxamide + L-glutamate + H(+). It carries out the reaction L-glutamine + H2O = L-glutamate + NH4(+). It functions in the pathway amino-acid biosynthesis; L-histidine biosynthesis; L-histidine from 5-phospho-alpha-D-ribose 1-diphosphate: step 5/9. Functionally, IGPS catalyzes the conversion of PRFAR and glutamine to IGP, AICAR and glutamate. The HisH subunit catalyzes the hydrolysis of glutamine to glutamate and ammonia as part of the synthesis of IGP and AICAR. The resulting ammonia molecule is channeled to the active site of HisF. The sequence is that of Imidazole glycerol phosphate synthase subunit HisH from Staphylococcus aureus (strain bovine RF122 / ET3-1).